Consider the following 396-residue polypeptide: Cathepsin E (396 aa).

An N-terminal signal peptide occupies residues 1-19 (MKTLLLLLLVLLELGEAQG). Residues 20–53 (SLHRVPLRRHPSLKKKLRARSQLSEFWKSHNLDM) constitute a propeptide, activation peptide. The Peptidase A1 domain maps to 78–396 (YFGTISIGSP…NRVGLAPAVP (319 aa)). Asparagine 90 is a glycosylation site (N-linked (GlcNAc...) asparagine). Residue aspartate 96 is part of the active site. 2 disulfides stabilise this stretch: cysteine 109–cysteine 114 and cysteine 272–cysteine 276. Aspartate 281 is an active-site residue. A disulfide bridge links cysteine 314 with cysteine 351.

It belongs to the peptidase A1 family. As to quaternary structure, homodimer; disulfide-linked. Glycosylated. The nature of the carbohydrate chain varies between cell types. In fibroblasts, the proenzyme contains a high mannose-type oligosaccharide, while the mature enzyme contains a complex-type oligosaccharide. In erythrocyte membranes, both the proenzyme and mature enzyme contain a complex-type oligosaccharide. In terms of processing, two forms are produced by autocatalytic cleavage, form I begins at Ile-54, form II begins at Thr-57. Expressed abundantly in the stomach, the Clara cells of the lung and activated B-lymphocytes, and at lower levels in lymph nodes, skin and spleen. Not expressed in resting B-lymphocytes.

Its subcellular location is the endosome. It carries out the reaction Similar to cathepsin D, but slightly broader specificity.. Functionally, may have a role in immune function. Probably involved in the processing of antigenic peptides during MHC class II-mediated antigen presentation. May play a role in activation-induced lymphocyte depletion in the thymus, and in neuronal degeneration and glial cell activation in the brain. In Homo sapiens (Human), this protein is Cathepsin E (CTSE).